The following is a 161-amino-acid chain: Small ribosomal subunit protein uS8m (161 aa).

It belongs to the universal ribosomal protein uS8 family. In terms of assembly, component of the mitochondrial small ribosomal subunit (mt-SSU). Mature N.crassa 74S mitochondrial ribosomes consist of a small (37S) and a large (54S) subunit. The 37S small subunit contains a 16S ribosomal RNA (16S mt-rRNA) and 32 different proteins. The 54S large subunit contains a 23S rRNA (23S mt-rRNA) and 42 different proteins.

The protein localises to the mitochondrion. Component of the mitochondrial ribosome (mitoribosome), a dedicated translation machinery responsible for the synthesis of mitochondrial genome-encoded proteins, including at least some of the essential transmembrane subunits of the mitochondrial respiratory chain. The mitoribosomes are attached to the mitochondrial inner membrane and translation products are cotranslationally integrated into the membrane. This Neurospora crassa (strain ATCC 24698 / 74-OR23-1A / CBS 708.71 / DSM 1257 / FGSC 987) protein is Small ribosomal subunit protein uS8m (mrps8).